The following is a 265-amino-acid chain: Histidine racemase (265 aa).

Cysteine 67 serves as the catalytic Proton acceptor. Cysteine 209 acts as the Proton donor in catalysis.

It belongs to the histidine racemase family. As to quaternary structure, homodimer.

The enzyme catalyses L-histidine = D-histidine. Activity is not affected by buffer composition (PO(4) or Tris), ions (SO(4)(2-), Mg(2+) and EDTA) or the PLP inhibitor hydroxylamine. However, the activity is hindered by iodoacetamide and Hg(2+), which are known inhibitors of enzymes with catalytic thiols. In terms of biological role, cofactor-independent isomerase that catalyzes the reversible conversion of L-histidine to D-histidine. Shows weak activity with L,L-lanthionine. The catalytic turnover is 10'000-fold faster with L-histidine than with L,L-lanthionine. May play a role in growth of F.nucleatum. This Fusobacterium nucleatum subsp. nucleatum (strain ATCC 25586 / DSM 15643 / BCRC 10681 / CIP 101130 / JCM 8532 / KCTC 2640 / LMG 13131 / VPI 4355) protein is Histidine racemase.